Here is a 379-residue protein sequence, read N- to C-terminus: Lactosylceramide 1,3-N-acetyl-beta-D-glucosaminyltransferase A (379 aa).

The Cytoplasmic portion of the chain corresponds to 1-12 (MFMNCRRVKKWH). The helical; Signal-anchor for type II membrane protein transmembrane segment at 13-30 (FLQLLSMCCVMSVLMVCW) threads the bilayer. The Lumenal portion of the chain corresponds to 31–379 (EHVDHHVVSH…NTYSCMAAFT (349 aa)). Asn57, Asn113, Asn168, and Asn277 each carry an N-linked (GlcNAc...) asparagine glycan.

It belongs to the glycosyltransferase 31 family.

It localises to the golgi apparatus membrane. The enzyme catalyses a beta-D-Gal-(1-&gt;4)-beta-D-Glc-(1&lt;-&gt;1)-Cer(d18:1(4E)) + UDP-N-acetyl-alpha-D-glucosamine = a beta-D-GlcNAc-(1-&gt;3)-beta-D-Gal-(1-&gt;4)-beta-D-Glc-(1&lt;-&gt;1)-Cer(d18:1(4E)) + UDP + H(+). It carries out the reaction a neolactoside nLc4Cer(d18:1(4E)) + UDP-N-acetyl-alpha-D-glucosamine = a neolactoside IV(3)-beta-GlcNAc-nLc4Cer(d18:1(4E)) + UDP + H(+). Its pathway is protein modification; protein glycosylation. Beta-1,3-N-acetylglucosaminyltransferase that plays a key role in the synthesis of lacto- or neolacto-series carbohydrate chains on glycolipids. The polypeptide is Lactosylceramide 1,3-N-acetyl-beta-D-glucosaminyltransferase A (b3gnt5a) (Danio rerio (Zebrafish)).